The primary structure comprises 464 residues: Nuclear distribution protein nudF 2 (464 aa).

The LisH domain occupies 9–41 (QAAELNKSIIAYLSAHGLAETLAAFRKESDFPD). Residues 63 to 88 (NSTLMKKLLALESHNKALRNELNSTR) are a coiled coil. 8 WD repeats span residues 112–151 (SHRD…LERT), 154–195 (GHTM…KNVK), 199–238 (GHDH…RVKT), 241–280 (DHTG…PICK), 285–343 (GHEN…MTLT), 344–383 (GHAS…RCVK), 388–424 (AHDG…AELP), and 426–464 (SKLD…RSHK).

The protein belongs to the WD repeat LIS1/nudF family. Self-associates. Interacts with nudE and dynein.

It localises to the cytoplasm. The protein resides in the cytoskeleton. It is found in the spindle pole. Positively regulates the activity of the minus-end directed microtubule motor protein dynein. May enhance dynein-mediated microtubule sliding by targeting dynein to the microtubule plus end. Required for nuclear migration during vegetative growth as well as development. Required for retrograde early endosome (EE) transport from the hyphal tip. Required for localization of dynein to the mitotic spindle poles. Recruits additional proteins to the dynein complex at SPBs. In Penicillium rubens (strain ATCC 28089 / DSM 1075 / NRRL 1951 / Wisconsin 54-1255) (Penicillium chrysogenum), this protein is Nuclear distribution protein nudF 2.